Consider the following 208-residue polypeptide: Small ribosomal subunit protein uS4 (208 aa).

The S4 RNA-binding domain occupies 98 to 163; it reads SRLDNVVYRA…LTPFVIARAV (66 aa).

It belongs to the universal ribosomal protein uS4 family. As to quaternary structure, part of the 30S ribosomal subunit. Contacts protein S5. The interaction surface between S4 and S5 is involved in control of translational fidelity.

In terms of biological role, one of the primary rRNA binding proteins, it binds directly to 16S rRNA where it nucleates assembly of the body of the 30S subunit. Its function is as follows. With S5 and S12 plays an important role in translational accuracy. This Acidothermus cellulolyticus (strain ATCC 43068 / DSM 8971 / 11B) protein is Small ribosomal subunit protein uS4.